Reading from the N-terminus, the 173-residue chain is Probable F-box protein At1g27490 (173 aa).

The F-box domain maps to 1–46 (MEWSLPVDLQEEILSRVPAKSLARWKSTPKQWKGPISIEFLHLLRS).

In Arabidopsis thaliana (Mouse-ear cress), this protein is Probable F-box protein At1g27490.